Consider the following 313-residue polypeptide: tRNA dimethylallyltransferase (313 aa).

11 to 18 (GPTACGKT) is an ATP binding site. Residue 13 to 18 (TACGKT) coordinates substrate. Interaction with substrate tRNA stretches follow at residues 36-39 (DSAL), 160-164 (QRIGR), and 243-248 (RCVGYR).

Belongs to the IPP transferase family. In terms of assembly, monomer. It depends on Mg(2+) as a cofactor.

The enzyme catalyses adenosine(37) in tRNA + dimethylallyl diphosphate = N(6)-dimethylallyladenosine(37) in tRNA + diphosphate. Functionally, catalyzes the transfer of a dimethylallyl group onto the adenine at position 37 in tRNAs that read codons beginning with uridine, leading to the formation of N6-(dimethylallyl)adenosine (i(6)A). The sequence is that of tRNA dimethylallyltransferase from Neisseria gonorrhoeae (strain ATCC 700825 / FA 1090).